A 382-amino-acid polypeptide reads, in one-letter code: Galactokinase (382 aa).

Substrate is bound at residue 34-37 (EHTD). Residue 124–130 (GAGLSSS) participates in ATP binding. Mg(2+) is bound by residues Ser130 and Glu162. Asp174 (proton acceptor) is an active-site residue. A substrate-binding site is contributed by Tyr223.

This sequence belongs to the GHMP kinase family. GalK subfamily.

It is found in the cytoplasm. It carries out the reaction alpha-D-galactose + ATP = alpha-D-galactose 1-phosphate + ADP + H(+). Its pathway is carbohydrate metabolism; galactose metabolism. Its function is as follows. Catalyzes the transfer of the gamma-phosphate of ATP to D-galactose to form alpha-D-galactose-1-phosphate (Gal-1-P). In Shigella boydii serotype 4 (strain Sb227), this protein is Galactokinase.